A 361-amino-acid polypeptide reads, in one-letter code: UDP-N-acetylglucosamine--N-acetylmuramyl-(pentapeptide) pyrophosphoryl-undecaprenol N-acetylglucosamine transferase (361 aa).

UDP-N-acetyl-alpha-D-glucosamine is bound by residues 12-14 (TGG), N126, R167, S192, I247, and Q292.

This sequence belongs to the glycosyltransferase 28 family. MurG subfamily.

The protein resides in the cell inner membrane. The enzyme catalyses di-trans,octa-cis-undecaprenyl diphospho-N-acetyl-alpha-D-muramoyl-L-alanyl-D-glutamyl-meso-2,6-diaminopimeloyl-D-alanyl-D-alanine + UDP-N-acetyl-alpha-D-glucosamine = di-trans,octa-cis-undecaprenyl diphospho-[N-acetyl-alpha-D-glucosaminyl-(1-&gt;4)]-N-acetyl-alpha-D-muramoyl-L-alanyl-D-glutamyl-meso-2,6-diaminopimeloyl-D-alanyl-D-alanine + UDP + H(+). Its pathway is cell wall biogenesis; peptidoglycan biosynthesis. In terms of biological role, cell wall formation. Catalyzes the transfer of a GlcNAc subunit on undecaprenyl-pyrophosphoryl-MurNAc-pentapeptide (lipid intermediate I) to form undecaprenyl-pyrophosphoryl-MurNAc-(pentapeptide)GlcNAc (lipid intermediate II). This is UDP-N-acetylglucosamine--N-acetylmuramyl-(pentapeptide) pyrophosphoryl-undecaprenol N-acetylglucosamine transferase from Syntrophus aciditrophicus (strain SB).